The following is a 545-amino-acid chain: ATP synthase F(1) complex subunit alpha, mitochondrial (545 aa).

5 residues coordinate ATP: Gln216, Gly218, Lys219, Thr220, and Ser221. Thr220 serves as a coordination point for Mg(2+). Asp304 lines the Mg(2+) pocket. Positions 465 and 467 each coordinate ATP.

This sequence belongs to the ATPase alpha/beta chains family. Homotrimer. Component of the ATP synthase complex composed at least of ATP5F1A/subunit alpha, ATP5F1B/subunit beta, ATP5MC1/subunit c (homooctomer), MT-ATP6/subunit a, MT-ATP8/subunit 8, ATP5ME/subunit e, ATP5MF/subunit f, ATP5MG/subunit g, ATP5MK/subunit k, ATP5MJ/subunit j, ATP5F1C/subunit gamma, ATP5F1D/subunit delta, ATP5F1E/subunit epsilon, ATP5PF/subunit F6, ATP5PB/subunit b, ATP5PD/subunit d, ATP5PO/subunit OSCP. ATP synthase complex consists of a soluble F(1) head domain (subunits alpha(3) and beta(3)) - the catalytic core - and a membrane F(0) domain - the membrane proton channel (subunits c, a, 8, e, f, g, k and j). These two domains are linked by a central stalk (subunits gamma, delta, and epsilon) rotating inside the F1 region and a stationary peripheral stalk (subunits F6, b, d, and OSCP).

The protein resides in the mitochondrion inner membrane. Its function is as follows. Subunit alpha, of the mitochondrial membrane ATP synthase complex (F(1)F(0) ATP synthase or Complex V) that produces ATP from ADP in the presence of a proton gradient across the membrane which is generated by electron transport complexes of the respiratory chain. ATP synthase complex consist of a soluble F(1) head domain - the catalytic core - and a membrane F(1) domain - the membrane proton channel. These two domains are linked by a central stalk rotating inside the F(1) region and a stationary peripheral stalk. During catalysis, ATP synthesis in the catalytic domain of F(1) is coupled via a rotary mechanism of the central stalk subunits to proton translocation. In vivo, can only synthesize ATP although its ATP hydrolase activity can be activated artificially in vitro. With the catalytic subunit beta (ATP5F1B), forms the catalytic core in the F(1) domain. Subunit alpha does not bear the catalytic high-affinity ATP-binding sites. The polypeptide is ATP synthase F(1) complex subunit alpha, mitochondrial (Xenopus laevis (African clawed frog)).